The primary structure comprises 124 residues: Large ribosomal subunit protein bL12 (124 aa).

The protein belongs to the bacterial ribosomal protein bL12 family. In terms of assembly, homodimer. Part of the ribosomal stalk of the 50S ribosomal subunit. Forms a multimeric L10(L12)X complex, where L10 forms an elongated spine to which 2 to 4 L12 dimers bind in a sequential fashion. Binds GTP-bound translation factors.

Its function is as follows. Forms part of the ribosomal stalk which helps the ribosome interact with GTP-bound translation factors. Is thus essential for accurate translation. The protein is Large ribosomal subunit protein bL12 of Campylobacter fetus subsp. fetus (strain 82-40).